The following is a 256-amino-acid chain: MAKLLLFLLPAILGLLVPRSAVALGTNYLLSGQTLDTEGHLKNGDFDLVMQDDCNLVLYNGNWQSNTANNGRDCKLTLTDYGELVIKNGDGSTVWKSGAQSVKGNYAAVVHPDGRLVVLGPSVFKIDPWVRGLNSLRFRNIPFTNNLLFSGQVLYGDGRLTAKNHQLVMQGDCNLVLYGGKYGWQSNTHGNGEHCFLRLNHKGELIIKDDDFKTIWSSRSSSKQGEYVLILQDDGFGVIYGPAIFETSSKRSIAAS.

The first 23 residues, 1–23 (MAKLLLFLLPAILGLLVPRSAVA), serve as a signal peptide directing secretion. Bulb-type lectin domains follow at residues 26–131 (TNYL…PWVR) and 145–252 (NNLL…SKRS). Beta-D-mannose is bound by residues 51–55 (QDDCN), tyrosine 59, tryptophan 63, glutamine 64, 170–174 (QGDCN), tyrosine 178, and 182–185 (YGWQ). The short motif at 51–59 (QDDCNLVLY) is the Carbohydrate-binding motif 1 element. 2 cysteine pairs are disulfide-bonded: cysteine 54–cysteine 74 and cysteine 173–cysteine 195. The short motif at 170–178 (QGDCNLVLY) is the Carbohydrate-binding motif 2 element.

Forms heterodimers.

The protein resides in the secreted. Functionally, mannose-specific lectin. Shows agglutinating activity towards erythrocytes from rabbit. The protein is Mannose-specific lectin 1 of Remusatia vivipara (Hitchhiker elephant ear).